The chain runs to 488 residues: Galactose-1-phosphate uridylyltransferase (488 aa).

This sequence belongs to the galactose-1-phosphate uridylyltransferase type 2 family.

The protein resides in the cytoplasm. It carries out the reaction alpha-D-galactose 1-phosphate + UDP-alpha-D-glucose = alpha-D-glucose 1-phosphate + UDP-alpha-D-galactose. Its pathway is carbohydrate metabolism; galactose metabolism. This Lactobacillus helveticus (Lactobacillus suntoryeus) protein is Galactose-1-phosphate uridylyltransferase (galT).